The primary structure comprises 299 residues: MVPMTTLAPLGSGSDPDSFLRLGIPSKGRLSELATGLLNQAGLSFRRQNRGLFARVSGLPIDLIFLRTDDIPTLCAEGAIDMGITGSDLIEEAGANVEQRMAFGVGRCRLAFCVPDDEDYTDAAQLNGKRIATSFPHVTEQYLATKNAKAHLVSLSGSVEAMIRLGVADAIVDLVETGSTLAANRLRILEEIGHYETVLIQNGTHRCKEVADRLVSRLEGVVLARDYSLVEYNIPRSRVSEAEKITPGFNSPTINSLEDKDWCAVQVMVRRGEVVEVMERLKEIGASGIFEMTINNCRL.

This sequence belongs to the ATP phosphoribosyltransferase family. Long subfamily. It depends on Mg(2+) as a cofactor.

It localises to the cytoplasm. It carries out the reaction 1-(5-phospho-beta-D-ribosyl)-ATP + diphosphate = 5-phospho-alpha-D-ribose 1-diphosphate + ATP. The protein operates within amino-acid biosynthesis; L-histidine biosynthesis; L-histidine from 5-phospho-alpha-D-ribose 1-diphosphate: step 1/9. Feedback inhibited by histidine. Functionally, catalyzes the condensation of ATP and 5-phosphoribose 1-diphosphate to form N'-(5'-phosphoribosyl)-ATP (PR-ATP). Has a crucial role in the pathway because the rate of histidine biosynthesis seems to be controlled primarily by regulation of HisG enzymatic activity. The protein is ATP phosphoribosyltransferase of Rhodopirellula baltica (strain DSM 10527 / NCIMB 13988 / SH1).